The sequence spans 497 residues: 4,4'-diaponeurosporene oxygenase (497 aa).

7 to 19 lines the FAD pocket; sequence VIGGGLGGISAAI.

Belongs to the carotenoid/retinoid oxidoreductase family. CrtP subfamily. It depends on FAD as a cofactor.

The enzyme catalyses all-trans-4,4'-diaponeurosporene + 2 AH2 + 2 O2 = 4,4'-diaponeurosporenal + 2 A + 3 H2O. It functions in the pathway carotenoid biosynthesis; staphyloxanthin biosynthesis; staphyloxanthin from farnesyl diphosphate: step 3/5. Its function is as follows. Involved in the biosynthesis of the yellow-orange carotenoid staphyloxanthin, which plays a role in the virulence via its protective function against oxidative stress. Catalyzes the oxidation of the terminal methyl side group of 4,4'-diaponeurosporene to form 4,4'-diaponeurosporen-4-al. The chain is 4,4'-diaponeurosporene oxygenase from Staphylococcus aureus (strain MSSA476).